We begin with the raw amino-acid sequence, 89 residues long: Small ribosomal subunit protein uS15 (89 aa).

This sequence belongs to the universal ribosomal protein uS15 family. As to quaternary structure, part of the 30S ribosomal subunit. Forms a bridge to the 50S subunit in the 70S ribosome, contacting the 23S rRNA.

Its function is as follows. One of the primary rRNA binding proteins, it binds directly to 16S rRNA where it helps nucleate assembly of the platform of the 30S subunit by binding and bridging several RNA helices of the 16S rRNA. In terms of biological role, forms an intersubunit bridge (bridge B4) with the 23S rRNA of the 50S subunit in the ribosome. In Shewanella sp. (strain ANA-3), this protein is Small ribosomal subunit protein uS15.